A 210-amino-acid polypeptide reads, in one-letter code: 3-hexulose-6-phosphate synthase (210 aa).

It belongs to the HPS/KGPDC family. HPS subfamily.

The enzyme catalyses D-ribulose 5-phosphate + formaldehyde = D-arabino-hex-3-ulose 6-phosphate. The protein operates within one-carbon metabolism; formaldehyde assimilation via RuMP pathway; D-fructose 6-phosphate from D-ribulose 5-phosphate and formaldehyde: step 1/2. Functionally, catalyzes the condensation of ribulose 5-phosphate with formaldehyde to form 3-hexulose 6-phosphate. The polypeptide is 3-hexulose-6-phosphate synthase (Staphylococcus epidermidis (strain ATCC 35984 / DSM 28319 / BCRC 17069 / CCUG 31568 / BM 3577 / RP62A)).